Reading from the N-terminus, the 491-residue chain is Glutamyl-tRNA(Gln) amidotransferase subunit A (491 aa).

Active-site charge relay system residues include K79 and S154. S178 functions as the Acyl-ester intermediate in the catalytic mechanism.

It belongs to the amidase family. GatA subfamily. As to quaternary structure, heterotrimer of A, B and C subunits.

The enzyme catalyses L-glutamyl-tRNA(Gln) + L-glutamine + ATP + H2O = L-glutaminyl-tRNA(Gln) + L-glutamate + ADP + phosphate + H(+). Allows the formation of correctly charged Gln-tRNA(Gln) through the transamidation of misacylated Glu-tRNA(Gln) in organisms which lack glutaminyl-tRNA synthetase. The reaction takes place in the presence of glutamine and ATP through an activated gamma-phospho-Glu-tRNA(Gln). The protein is Glutamyl-tRNA(Gln) amidotransferase subunit A of Synechococcus sp. (strain CC9605).